Reading from the N-terminus, the 303-residue chain is Epimerase family protein YfhF (303 aa).

Belongs to the NAD(P)-dependent epimerase/dehydratase family. SDR39U1 subfamily.

The sequence is that of Epimerase family protein YfhF (yfhF) from Bacillus subtilis (strain 168).